Here is a 454-residue protein sequence, read N- to C-terminus: Tubulin beta-3 chain (454 aa).

GTP-binding residues include glutamine 11, glutamate 75, serine 144, glycine 148, threonine 149, glycine 150, asparagine 210, and asparagine 232. Glutamate 75 contributes to the Mg(2+) binding site. Residues 435 to 454 (TADDEFDPEVNQEEVEGDCI) form a disordered region.

It belongs to the tubulin family. In terms of assembly, dimer of alpha and beta chains. A typical microtubule is a hollow water-filled tube with an outer diameter of 25 nm and an inner diameter of 15 nM. Alpha-beta heterodimers associate head-to-tail to form protofilaments running lengthwise along the microtubule wall with the beta-tubulin subunit facing the microtubule plus end conferring a structural polarity. Microtubules usually have 13 protofilaments but different protofilament numbers can be found in some organisms and specialized cells. Requires Mg(2+) as cofactor.

The protein localises to the cytoplasm. It is found in the cytoskeleton. Tubulin is the major constituent of microtubules, a cylinder consisting of laterally associated linear protofilaments composed of alpha- and beta-tubulin heterodimers. Microtubules grow by the addition of GTP-tubulin dimers to the microtubule end, where a stabilizing cap forms. Below the cap, tubulin dimers are in GDP-bound state, owing to GTPase activity of alpha-tubulin. In Drosophila melanogaster (Fruit fly), this protein is Tubulin beta-3 chain (betaTub60D).